Here is a 122-residue protein sequence, read N- to C-terminus: 5'-AMP-activated protein kinase subunit beta-1 (122 aa).

Phosphoserine occurs at positions 5, 61, 66, and 73. A glycogen-binding domain region spans residues 33–122; that stretch reads EVNDKASAQA…TVNNIIQVKK (90 aa). Residue Thr113 is modified to Phosphothreonine.

Belongs to the 5'-AMP-activated protein kinase beta subunit family. AMPK is a heterotrimer of an alpha catalytic subunit (PRKAA1 or PRKAA2), a beta (PRKAB1 or PRKAB2) and a gamma non-catalytic subunits (PRKAG1, PRKAG2 or PRKAG3). Interacts with FNIP1 and FNIP2. Post-translationally, phosphorylated when associated with the catalytic subunit (PRKAA1 or PRKAA2). Phosphorylated by ULK1; leading to negatively regulate AMPK activity and suggesting the existence of a regulatory feedback loop between ULK1 and AMPK.

In terms of biological role, non-catalytic subunit of AMP-activated protein kinase (AMPK), an energy sensor protein kinase that plays a key role in regulating cellular energy metabolism. In response to reduction of intracellular ATP levels, AMPK activates energy-producing pathways and inhibits energy-consuming processes: inhibits protein, carbohydrate and lipid biosynthesis, as well as cell growth and proliferation. AMPK acts via direct phosphorylation of metabolic enzymes, and by longer-term effects via phosphorylation of transcription regulators. Also acts as a regulator of cellular polarity by remodeling the actin cytoskeleton; probably by indirectly activating myosin. Beta non-catalytic subunit acts as a scaffold on which the AMPK complex assembles, via its C-terminus that bridges alpha (PRKAA1 or PRKAA2) and gamma subunits (PRKAG1, PRKAG2 or PRKAG3). This Sus scrofa (Pig) protein is 5'-AMP-activated protein kinase subunit beta-1 (PRKAB1).